The primary structure comprises 502 residues: Dipeptide and tripeptide permease A (502 aa).

Residues 1-35 (MSTANNKPTDESVSLNAFKQPKAFYLIFSIELWER) lie on the Cytoplasmic side of the membrane. A helical transmembrane segment spans residues 36 to 56 (FGFYGLQGIMAVYLVKQLGMS). The Periplasmic portion of the chain corresponds to 57–60 (EADS). Residues 61–81 (ITLFSSFSALVYGLVAVGGWL) form a helical membrane-spanning segment. At 82–90 (GDKVLGTKR) the chain is on the cytoplasmic side. A helical membrane pass occupies residues 91–111 (VIMLGAVVLAIGYGLVAWSGH). Residue aspartate 112 is a topological domain, periplasmic. The helical transmembrane segment at 113 to 133 (AAVVYMGMATIAVGNGLFKAN) threads the bilayer. Residues 134–154 (PSSLLSTCYNKDDPRLDGAFT) lie on the Cytoplasmic side of the membrane. A helical transmembrane segment spans residues 155–175 (MYYMSINIGSFFSMLATPWLA). Topologically, residues 176-179 (AKFG) are periplasmic. Residues 180-200 (WSVAFALSFVGMLITVVNFLF) form a helical membrane-spanning segment. Over 201–218 (CRSWVKNYGSKPDFEPVH) the chain is Cytoplasmic. Residues 219–239 (IGKLLATIVGVVILATIATWL) form a helical membrane-spanning segment. Topologically, residues 240–247 (LHNQGVAR) are periplasmic. Residues 248-268 (AVLGVVALGIICIFAKEAFAM) traverse the membrane as a helical segment. Over 269 to 275 (QGAARRK) the chain is Cytoplasmic. A helical membrane pass occupies residues 276 to 296 (MIVAFILMLQAVVFFVLYSQM). The Periplasmic segment spans residues 297-321 (PTSLNFFAIRNVEHSILSIAFEPEQ). The chain crosses the membrane as a helical span at residues 322–342 (FQALNPFWIMIGSPILAAIYN). The Cytoplasmic portion of the chain corresponds to 343-353 (KMGDRLPMPHK). The helical transmembrane segment at 354–374 (FAIGMVLCSGAFLVLPLGTKF) threads the bilayer. Residues 375–384 (ATDAGIVSVN) lie on the Periplasmic side of the membrane. A helical transmembrane segment spans residues 385–405 (WLILSYALQSIGELMISGLGL). The Cytoplasmic portion of the chain corresponds to 406 to 415 (AMVAQLVPQR). The helical transmembrane segment at 416-436 (LMGFIMGSWFLTTAGAALIAG) threads the bilayer. Topologically, residues 437-460 (KIANLMAVPENVTDPLVSLEVYGR) are periplasmic. Residues 461-481 (VFMQIGIATAVIAVLMLLTAP) traverse the membrane as a helical segment. Over 482–502 (KLNRMTLEDDKAAKATDTATA) the chain is Cytoplasmic.

It belongs to the major facilitator superfamily. Proton-dependent oligopeptide transporter (POT/PTR) (TC 2.A.17) family. DtpA subfamily.

The protein resides in the cell inner membrane. Its function is as follows. Proton-dependent permease that transports di- and tripeptides. In Enterobacter sp. (strain 638), this protein is Dipeptide and tripeptide permease A.